The chain runs to 452 residues: Argininosuccinate lyase (452 aa).

The tract at residues Ala-431 to Ala-452 is disordered.

It belongs to the lyase 1 family. Argininosuccinate lyase subfamily.

The protein resides in the cytoplasm. The catalysed reaction is 2-(N(omega)-L-arginino)succinate = fumarate + L-arginine. It functions in the pathway amino-acid biosynthesis; L-arginine biosynthesis; L-arginine from L-ornithine and carbamoyl phosphate: step 3/3. In Tremblaya princeps, this protein is Argininosuccinate lyase.